Reading from the N-terminus, the 489-residue chain is MEYLPSLQQEFDELKPSLFELLAEQQLSDLLPPSIRYILAVATHRHPRYLLRVLNSFDEVYALLSLVVERYYLRNFGGSFTENFYSLKRERVLLTKNGEIPRAQLGAPGPVRESLKLRNSDVWKNLLVMVGIPYLKRKLDEGYDIHAAPQASLIMNGGPRYNPSDDLPPHPTIRQRFMHAYKWFLRNVYPSFNAAYYFSILAFNLAYLFDNTKYSSPFLWLIGTRIRRLSSADHQAIAKILEGKPQTPNSRSARSRPGSGLLGLFSPHNLYPQLLTSLRYFLPASIFALKFLEWWHASDFSRQLARKATDTLDIPAPITKGMISPSERKSRPPTKQKEDPESPKSALKTSSPHKRIQPPISASSYLPIFTVPLPPADSDAASSCPVCLNQLTNPTACQTGYVYCYVCIFHWLNGEHQRQIDFMNGDGAGAAWEDDSGDGIDADGDRNETESAAKTGKSRHGKWESGKGRCPVTGRRVLGGTEGLRRVLI.

At 1 to 17 the chain is on the peroxisomal matrix side; it reads MEYLPSLQQEFDELKPS. The chain crosses the membrane as a helical span at residues 18-45; the sequence is LFELLAEQQLSDLLPPSIRYILAVATHR. Residues 46–49 lie on the Cytoplasmic side of the membrane; sequence HPRY. The chain crosses the membrane as a helical span at residues 50–74; it reads LLRVLNSFDEVYALLSLVVERYYLR. The Peroxisomal matrix segment spans residues 75-118; that stretch reads NFGGSFTENFYSLKRERVLLTKNGEIPRAQLGAPGPVRESLKLR. Residues 119-156 traverse the membrane as a helical segment; the sequence is NSDVWKNLLVMVGIPYLKRKLDEGYDIHAAPQASLIMN. At 157–172 the chain is on the cytoplasmic side; sequence GGPRYNPSDDLPPHPT. Residues 173–209 form a helical membrane-spanning segment; sequence IRQRFMHAYKWFLRNVYPSFNAAYYFSILAFNLAYLF. The Peroxisomal matrix portion of the chain corresponds to 210–280; that stretch reads DNTKYSSPFL…YPQLLTSLRY (71 aa). A helical transmembrane segment spans residues 281-308; sequence FLPASIFALKFLEWWHASDFSRQLARKA. Over 309–489 the chain is Cytoplasmic; it reads TDTLDIPAPI…GTEGLRRVLI (181 aa). The segment at 316-359 is disordered; that stretch reads APITKGMISPSERKSRPPTKQKEDPESPKSALKTSSPHKRIQPP. Residues 326–342 show a composition bias toward basic and acidic residues; it reads SERKSRPPTKQKEDPES. Zn(2+)-binding residues include Cys-384, Cys-387, Cys-404, and Cys-407. The RING-type; degenerate zinc finger occupies 384 to 444; that stretch reads CPVCLNQLTN…DSGDGIDADG (61 aa). Residues 433-442 are compositionally biased toward acidic residues; it reads EDDSGDGIDA. The interval 433–469 is disordered; the sequence is EDDSGDGIDADGDRNETESAAKTGKSRHGKWESGKGR.

This sequence belongs to the pex2/pex10/pex12 family. In terms of assembly, component of the PEX2-PEX10-PEX12 retrotranslocation channel, composed of PEX2, PEX10 and PEX12.

The protein resides in the peroxisome membrane. The protein operates within protein modification; protein ubiquitination. Component of a retrotranslocation channel required for peroxisome organization by mediating export of the PEX5 receptor from peroxisomes to the cytosol, thereby promoting PEX5 recycling. The retrotranslocation channel is composed of PEX2, PEX10 and PEX12; each subunit contributing transmembrane segments that coassemble into an open channel that specifically allows the passage of PEX5 through the peroxisomal membrane. PEX12 also regulates PEX5 recycling by activating the E3 ubiquitin-protein ligase activity of PEX10. When PEX5 recycling is compromised, PEX12 stimulates PEX10-mediated polyubiquitination of PEX5, leading to its subsequent degradation. The chain is Peroxisome assembly protein 12 (PEX12) from Emericella nidulans (strain FGSC A4 / ATCC 38163 / CBS 112.46 / NRRL 194 / M139) (Aspergillus nidulans).